Consider the following 44-residue polypeptide: Phosphatase RapA inhibitor (44 aa).

The propeptide occupies 1 to 39 (MKSKWMSGLLLVAVGFSFTQVMVHAGETANTEGKTFHIA).

This sequence belongs to the Phr family. As to quaternary structure, interacts with RapA and inhibits its interaction with Spo0F. In terms of processing, secreted with a propeptide domain, which is cleaved in the cell wall by the secreted serine proteases subtilisin and Vpr to produce a mature signaling peptide. Contains a predicted signal peptide cleavage site in the N-terminal region, however the propeptide is probably subject to only one processing event, at the N-terminal end of the mature peptide.

The protein resides in the secreted. Its subcellular location is the cytoplasm. Inhibition of RapA requires a free carboxylate group at the C-terminal end of the PhrA pentapeptide. A free C-terminal carboxylic acid PhrA pentapeptide inhibits RapA phosphatase activity at a 1:1 ratio and is approximately 200 fold more active than a C-terminal amide peptide. In terms of biological role, signaling molecule involved in the regulation of sporulation. Secreted during production, but the mature peptide acts intracellularly, indicating that it needs to be imported into the cell to function. Inhibitor of the RapA phosphatase activity. Does not act on RapB. This Bacillus subtilis (strain 168) protein is Phosphatase RapA inhibitor.